We begin with the raw amino-acid sequence, 138 residues long: Transcription antitermination protein NusB (138 aa).

Belongs to the NusB family.

Its function is as follows. Involved in transcription antitermination. Required for transcription of ribosomal RNA (rRNA) genes. Binds specifically to the boxA antiterminator sequence of the ribosomal RNA (rrn) operons. The protein is Transcription antitermination protein NusB of Helicobacter pylori (strain G27).